The chain runs to 1074 residues: Phospholipase D1 (1074 aa).

Residues 81 to 212 form the PX domain; sequence VKAQVLEVER…TEFLDVSQLS (132 aa). One can recognise a PH domain in the interval 219–328; that stretch reads PKGLEGMIMK…WGGAIEEFIQ (110 aa). Residues cysteine 240 and cysteine 241 are each lipidated (S-palmitoyl cysteine). In terms of domain architecture, PLD phosphodiesterase 1 spans 459-486; it reads YLWAHHEKLVIIDQSVAFVGGIDLAYGR. The tract at residues 463–928 is catalytic; that stretch reads HHEKLVIIDQ…MLGKRDSEMA (466 aa). Phosphoserine occurs at positions 499, 561, and 629. The PLD phosphodiesterase 2 domain maps to 891–918; the sequence is ELIYVHSKLLIADDNTVIIGSANINDRS.

It belongs to the phospholipase D family. As to quaternary structure, interacts with PIP5K1B. In terms of processing, phosphorylated on serine and threonine residues. Post-translationally, it is uncertain whether palmitoylation is on Cys-240 and/or Cys-241. Palmitoylation is required prior to phosphorylation.

Its subcellular location is the cytoplasm. It localises to the perinuclear region. The protein localises to the endoplasmic reticulum membrane. It is found in the golgi apparatus membrane. The protein resides in the late endosome membrane. It catalyses the reaction a 1,2-diacyl-sn-glycero-3-phosphocholine + H2O = a 1,2-diacyl-sn-glycero-3-phosphate + choline + H(+). The enzyme catalyses ethanol + a 1,2-diacyl-sn-glycero-3-phosphocholine = 1,2-diacyl-sn-glycero-3-phosphoethanol + choline. The catalysed reaction is 1,2-dihexadecanoyl-sn-glycero-3-phosphocholine + H2O = 1,2-dihexadecanoyl-sn-glycero-3-phosphate + choline + H(+). Stimulated by phosphatidylinositol 4,5-bisphosphate and phosphatidylinositol 3,4,5-trisphosphate, activated by the phosphokinase C-alpha, by the ADP-ribosylation factor-1 (ARF-1), and to a lesser extent by GTP-binding proteins: RHO A, RAC-1 and CDC42. Inhibited by oleate. Function as phospholipase selective for phosphatidylcholine. Implicated as a critical step in numerous cellular pathways, including signal transduction, membrane trafficking, and the regulation of mitosis. May be involved in the regulation of perinuclear intravesicular membrane traffic. In Rattus norvegicus (Rat), this protein is Phospholipase D1.